We begin with the raw amino-acid sequence, 494 residues long: Guanosine-5'-triphosphate,3'-diphosphate pyrophosphatase (494 aa).

This sequence belongs to the GppA/Ppx family. GppA subfamily.

The enzyme catalyses guanosine 3'-diphosphate 5'-triphosphate + H2O = guanosine 3',5'-bis(diphosphate) + phosphate + H(+). The protein operates within purine metabolism; ppGpp biosynthesis; ppGpp from GTP: step 2/2. In terms of biological role, catalyzes the conversion of pppGpp to ppGpp. Guanosine pentaphosphate (pppGpp) is a cytoplasmic signaling molecule which together with ppGpp controls the 'stringent response', an adaptive process that allows bacteria to respond to amino acid starvation, resulting in the coordinated regulation of numerous cellular activities. This Erwinia tasmaniensis (strain DSM 17950 / CFBP 7177 / CIP 109463 / NCPPB 4357 / Et1/99) protein is Guanosine-5'-triphosphate,3'-diphosphate pyrophosphatase.